Here is a 101-residue protein sequence, read N- to C-terminus: MAGQKIRIRLKAYDHEAIDASAKKIVETVTRTGARVVGPVPLPTEKNVYAVIRSPHKYKDSREHFEMRTHKRLIDILDPTPKTVDALMRIDLPASVDVNIQ.

It belongs to the universal ribosomal protein uS10 family. In terms of assembly, part of the 30S ribosomal subunit.

In terms of biological role, involved in the binding of tRNA to the ribosomes. The polypeptide is Small ribosomal subunit protein uS10 (Corynebacterium aurimucosum (strain ATCC 700975 / DSM 44827 / CIP 107346 / CN-1) (Corynebacterium nigricans)).